The sequence spans 448 residues: tRNA(Ile)-lysidine synthase (448 aa).

25–30 (SGGSDS) is an ATP binding site.

The protein belongs to the tRNA(Ile)-lysidine synthase family.

The protein resides in the cytoplasm. The enzyme catalyses cytidine(34) in tRNA(Ile2) + L-lysine + ATP = lysidine(34) in tRNA(Ile2) + AMP + diphosphate + H(+). Functionally, ligates lysine onto the cytidine present at position 34 of the AUA codon-specific tRNA(Ile) that contains the anticodon CAU, in an ATP-dependent manner. Cytidine is converted to lysidine, thus changing the amino acid specificity of the tRNA from methionine to isoleucine. In Brucella abortus (strain S19), this protein is tRNA(Ile)-lysidine synthase.